The chain runs to 175 residues: ATP synthase subunit b (175 aa).

A helical membrane pass occupies residues 22–42 (LNLLETNIINIAIVFGLLIFL).

This sequence belongs to the ATPase B chain family. In terms of assembly, F-type ATPases have 2 components, F(1) - the catalytic core - and F(0) - the membrane proton channel. F(1) has five subunits: alpha(3), beta(3), gamma(1), delta(1), epsilon(1). F(0) has four main subunits: a(1), b(1), b'(1) and c(10-14). The alpha and beta chains form an alternating ring which encloses part of the gamma chain. F(1) is attached to F(0) by a central stalk formed by the gamma and epsilon chains, while a peripheral stalk is formed by the delta, b and b' chains.

The protein resides in the cell inner membrane. F(1)F(0) ATP synthase produces ATP from ADP in the presence of a proton or sodium gradient. F-type ATPases consist of two structural domains, F(1) containing the extramembraneous catalytic core and F(0) containing the membrane proton channel, linked together by a central stalk and a peripheral stalk. During catalysis, ATP synthesis in the catalytic domain of F(1) is coupled via a rotary mechanism of the central stalk subunits to proton translocation. Functionally, component of the F(0) channel, it forms part of the peripheral stalk, linking F(1) to F(0). The protein is ATP synthase subunit b of Gloeobacter violaceus (strain ATCC 29082 / PCC 7421).